The primary structure comprises 297 residues: NAC domain-containing protein 72 (297 aa).

The NAC domain maps to 14 to 162 (LPPGFRFYPT…DWVLCRIYKK (149 aa)). A DNA-binding region spans residues 111-168 (VGIKKALVFYAGKAPKGTKTNWIMHEYRLIEHSRSHGSSKLDDWVLCRIYKKTSGSQR). 2 disordered regions span residues 168–195 (RQAV…SQLD) and 259–278 (GEAE…LTQS). Over residues 266–277 (VNRQQNSSGLTQ) the composition is skewed to polar residues.

As to expression, expressed in leaves and in root pericycle and epidermis.

The protein resides in the nucleus. Transcription factors that bind specifically to the 5'-CATGTG-3' motif and with bipartite regions with 5'-CGTr-3' and 5'-YACG-3' as cores. Involved in the regulation of metabolic reprogramming during senescence by promoting the chloroplast protein degradation and the catabolism of lysine, phytol and free fatty acids via the induction of CV, LKR/SDH and PES1 expression. Also triggers the degradation of starch and the accumulation of mono- and disaccharides during senescence by enhancing the expression of AMY1, SFP1 and SWEET15. This chain is NAC domain-containing protein 72, found in Arabidopsis thaliana (Mouse-ear cress).